We begin with the raw amino-acid sequence, 117 residues long: Large ribosomal subunit protein bL19 (117 aa).

It belongs to the bacterial ribosomal protein bL19 family.

In terms of biological role, this protein is located at the 30S-50S ribosomal subunit interface and may play a role in the structure and function of the aminoacyl-tRNA binding site. This is Large ribosomal subunit protein bL19 from Christiangramia forsetii (strain DSM 17595 / CGMCC 1.15422 / KT0803) (Gramella forsetii).